The following is a 140-amino-acid chain: Nucleoside diphosphate kinase (140 aa).

Residues K11, F59, R87, T93, R104, and N114 each coordinate ATP. H117 acts as the Pros-phosphohistidine intermediate in catalysis.

Belongs to the NDK family. Homotetramer. It depends on Mg(2+) as a cofactor.

The protein localises to the cytoplasm. The enzyme catalyses a 2'-deoxyribonucleoside 5'-diphosphate + ATP = a 2'-deoxyribonucleoside 5'-triphosphate + ADP. It carries out the reaction a ribonucleoside 5'-diphosphate + ATP = a ribonucleoside 5'-triphosphate + ADP. Its function is as follows. Major role in the synthesis of nucleoside triphosphates other than ATP. The ATP gamma phosphate is transferred to the NDP beta phosphate via a ping-pong mechanism, using a phosphorylated active-site intermediate. This Rhodopseudomonas palustris (strain ATCC BAA-98 / CGA009) protein is Nucleoside diphosphate kinase.